The chain runs to 440 residues: DNA polymerase delta small subunit (440 aa).

Belongs to the DNA polymerase delta/II small subunit family. In terms of assembly, heterodimer with subunits of 125 kDa and 50 kDa.

It is found in the nucleus. It carries out the reaction DNA(n) + a 2'-deoxyribonucleoside 5'-triphosphate = DNA(n+1) + diphosphate. Its function is as follows. The function of the small subunit is not yet clear. This Arabidopsis thaliana (Mouse-ear cress) protein is DNA polymerase delta small subunit (POLD2).